A 198-amino-acid polypeptide reads, in one-letter code: Inner membrane-spanning protein YciB (198 aa).

A run of 5 helical transmembrane segments spans residues Ile36–Ile56, Leu67–Phe87, Trp90–Gly110, Ile135–Phe155, and Phe162–Leu182.

The protein belongs to the YciB family.

It localises to the cell inner membrane. In terms of biological role, plays a role in cell envelope biogenesis, maintenance of cell envelope integrity and membrane homeostasis. In Pseudomonas fluorescens (strain Pf0-1), this protein is Inner membrane-spanning protein YciB.